Consider the following 77-residue polypeptide: U11-lycotoxin-Ls1d (77 aa).

A signal peptide spans 1-20 (MKLIIFTGLVLFAIVSLIEA). The propeptide occupies 21-26 (EEESGR).

This sequence belongs to the neurotoxin 19 (CSTX) family. 10 (U11-Lctx) subfamily. Contains 4 disulfide bonds. Expressed by the venom gland.

It localises to the secreted. The sequence is that of U11-lycotoxin-Ls1d from Lycosa singoriensis (Wolf spider).